Consider the following 201-residue polypeptide: ATP-dependent Clp protease proteolytic subunit (201 aa).

Ser98 functions as the Nucleophile in the catalytic mechanism. The active site involves His123.

Belongs to the peptidase S14 family. In terms of assembly, fourteen ClpP subunits assemble into 2 heptameric rings which stack back to back to give a disk-like structure with a central cavity, resembling the structure of eukaryotic proteasomes.

The protein resides in the cytoplasm. It carries out the reaction Hydrolysis of proteins to small peptides in the presence of ATP and magnesium. alpha-casein is the usual test substrate. In the absence of ATP, only oligopeptides shorter than five residues are hydrolyzed (such as succinyl-Leu-Tyr-|-NHMec, and Leu-Tyr-Leu-|-Tyr-Trp, in which cleavage of the -Tyr-|-Leu- and -Tyr-|-Trp bonds also occurs).. Functionally, cleaves peptides in various proteins in a process that requires ATP hydrolysis. Has a chymotrypsin-like activity. Plays a major role in the degradation of misfolded proteins. In Rickettsia akari (strain Hartford), this protein is ATP-dependent Clp protease proteolytic subunit.